We begin with the raw amino-acid sequence, 159 residues long: ATP-dependent Clp protease adapter protein CLPS1, chloroplastic (159 aa).

The transit peptide at 1 to 44 (METAICGRLALAPSSLFNSKSGDKHLVSKGPCVNRSILMTLSTS) directs the protein to the chloroplast.

It belongs to the ClpS family. Interacts with CLPC1 (via N-terminus) and CLPC2, but not with CLPt1 or CLPT2. Binds to ClpF; this interaction stimulates their association with ClpC. Expressed exclusively in photosynthetic green tissues with high levels in young, developing leaf tissues.

The protein localises to the plastid. The protein resides in the chloroplast stroma. Small adapter protein that modulate the activity of CLPC. Involved in plastid biogenesis in particular when chloroplast protein synthesis capacity is a limiting factor. Probably involved in substrate selection for plastid Clp protease system. Recruitment to ClpC chaperones is facilitated by CLPF thus forming a binary adapter for selective substrate recognition and delivery to plastid Clp protease system (CLPC). The chain is ATP-dependent Clp protease adapter protein CLPS1, chloroplastic from Arabidopsis thaliana (Mouse-ear cress).